The primary structure comprises 876 residues: Leucine--tRNA ligase (876 aa).

The 'HIGH' region signature appears at proline 43 to histidine 53. The 'KMSKS' region signature appears at lysine 632–serine 636. Lysine 635 is an ATP binding site.

This sequence belongs to the class-I aminoacyl-tRNA synthetase family.

The protein resides in the cytoplasm. The catalysed reaction is tRNA(Leu) + L-leucine + ATP = L-leucyl-tRNA(Leu) + AMP + diphosphate. This is Leucine--tRNA ligase from Agrobacterium fabrum (strain C58 / ATCC 33970) (Agrobacterium tumefaciens (strain C58)).